We begin with the raw amino-acid sequence, 646 residues long: UvrABC system protein B (646 aa).

The 383-residue stretch at 29–411 (LEKNPEKSKQ…SNQVVEQIIR (383 aa)) folds into the Helicase ATP-binding domain. Position 42 to 49 (42 to 49 (GVTGSGKT)) interacts with ATP. The short motif at 95–118 (YYDYYQPESYIPQKDQYIEKDAQI) is the Beta-hairpin element. The Helicase C-terminal domain maps to 428 to 590 (QVEDIIKETE…ITPQTIVKPI (163 aa)). Positions 609–644 (PNVIVELEAEMYEAAEALEFEKAIKIRDTIAKLKKK) constitute a UVR domain.

The protein belongs to the UvrB family. As to quaternary structure, forms a heterotetramer with UvrA during the search for lesions. Interacts with UvrC in an incision complex.

The protein localises to the cytoplasm. In terms of biological role, the UvrABC repair system catalyzes the recognition and processing of DNA lesions. A damage recognition complex composed of 2 UvrA and 2 UvrB subunits scans DNA for abnormalities. Upon binding of the UvrA(2)B(2) complex to a putative damaged site, the DNA wraps around one UvrB monomer. DNA wrap is dependent on ATP binding by UvrB and probably causes local melting of the DNA helix, facilitating insertion of UvrB beta-hairpin between the DNA strands. Then UvrB probes one DNA strand for the presence of a lesion. If a lesion is found the UvrA subunits dissociate and the UvrB-DNA preincision complex is formed. This complex is subsequently bound by UvrC and the second UvrB is released. If no lesion is found, the DNA wraps around the other UvrB subunit that will check the other stand for damage. The protein is UvrABC system protein B of Methanococcus maripaludis (strain DSM 14266 / JCM 13030 / NBRC 101832 / S2 / LL).